The sequence spans 447 residues: tRNA modification GTPase MnmE (447 aa).

Residues Arg24, Glu81, and Lys120 each contribute to the (6S)-5-formyl-5,6,7,8-tetrahydrofolate site. Positions 216-371 (GLNVVIAGKP…LRKELSDIAG (156 aa)) constitute a TrmE-type G domain. A K(+)-binding site is contributed by Asn226. GTP contacts are provided by residues 226 to 231 (NAGKSS), 245 to 251 (TDIAGTT), and 270 to 273 (DTAG). Ser230 is a Mg(2+) binding site. Positions 245, 247, and 250 each coordinate K(+). A Mg(2+)-binding site is contributed by Thr251. Lys447 contributes to the (6S)-5-formyl-5,6,7,8-tetrahydrofolate binding site.

The protein belongs to the TRAFAC class TrmE-Era-EngA-EngB-Septin-like GTPase superfamily. TrmE GTPase family. As to quaternary structure, homodimer. Heterotetramer of two MnmE and two MnmG subunits. The cofactor is K(+).

It is found in the cytoplasm. Its function is as follows. Exhibits a very high intrinsic GTPase hydrolysis rate. Involved in the addition of a carboxymethylaminomethyl (cmnm) group at the wobble position (U34) of certain tRNAs, forming tRNA-cmnm(5)s(2)U34. The sequence is that of tRNA modification GTPase MnmE from Ruthia magnifica subsp. Calyptogena magnifica.